Consider the following 222-residue polypeptide: Ribonuclease 3 (222 aa).

In terms of domain architecture, RNase III spans 3–125 (SQSVAKKLNH…LFGAIYLDAG (123 aa)). Glu-38 contacts Mg(2+). The active site involves Asp-42. The Mg(2+) site is built by Asp-111 and Glu-114. Glu-114 is an active-site residue. The region spanning 152–222 (DAKTRLQEWL…AEKALKELLA (71 aa)) is the DRBM domain.

The protein belongs to the ribonuclease III family. Homodimer. Requires Mg(2+) as cofactor.

It is found in the cytoplasm. The catalysed reaction is Endonucleolytic cleavage to 5'-phosphomonoester.. Its function is as follows. Digests double-stranded RNA. Involved in the processing of primary rRNA transcript to yield the immediate precursors to the large and small rRNAs (23S and 16S). Processes some mRNAs, and tRNAs when they are encoded in the rRNA operon. Processes pre-crRNA and tracrRNA of type II CRISPR loci if present in the organism. In Dechloromonas aromatica (strain RCB), this protein is Ribonuclease 3.